Consider the following 206-residue polypeptide: LOB domain-containing protein 35 (206 aa).

One can recognise an LOB domain in the interval 4-105; the sequence is TCCSACKVMK…EQINSAKNEL (102 aa). A disordered region spans residues 184–206; it reads ASTSGGTSATQKTLPFPQNHNQP.

Belongs to the LOB domain-containing protein family.

The polypeptide is LOB domain-containing protein 35 (LBD35) (Arabidopsis thaliana (Mouse-ear cress)).